An 860-amino-acid chain; its full sequence is Protein argonaute-3 (860 aa).

M1 carries the N-acetylmethionine modification. In terms of domain architecture, PAZ spans 230–349 (PVIQFMCEVL…LPLEVCNIVA (120 aa)). In terms of domain architecture, Piwi spans 518-819 (LIIVILPGKT…VAFRARYHLV (302 aa)). The tract at residues 530–567 (YAEVKRVGDTLLGMATQCVQVKNVIKTSPQTLSNLCLK) is interaction with guide RNA. Positions 598, 638, and 670 each coordinate a divalent metal cation. The segment at 758 to 805 (QGTSRPSHYHVLWDDNFFTADELQLLTYQLCHTYVRCTRSVSIPAPAY) is interaction with guide RNA. H808 lines the a divalent metal cation pocket. Phosphoserine is present on S825.

Belongs to the argonaute family. Ago subfamily. In terms of assembly, interacts with EIF4B, IMP8, PRMT5 and TNRC6B. Interacts with APOBEC3F, APOBEC3G and APOBEC3H. Interacts with EDC4. Post-translationally, ubiquitinated on surface-exposed lysines by a SCF-like E3 ubiquitin-protein ligase complex containing ZSWIM8 during target-directed microRNA degradation (TDMD), a process that mediates degradation of microRNAs (miRNAs). Ubiquitination by the SCF-like E3 ubiquitin-protein ligase complex containing ZSWIM8 leads to its subsequent degradation, thereby exposing miRNAs for degradation. ZSWIM8 recognizes and binds AGO3 when it is engaged with a TDMD target.

The protein resides in the cytoplasm. Its subcellular location is the P-body. The enzyme catalyses Endonucleolytic cleavage to 5'-phosphomonoester.. Required for RNA-mediated gene silencing (RNAi). Binds to short RNAs such as microRNAs (miRNAs) and represses the translation of mRNAs which are complementary to them. Proposed to be involved in stabilization of small RNA derivates (siRNA) derived from processed RNA polymerase III-transcribed Alu repeats containing a DR2 retinoic acid response element (RARE) in stem cells and in the subsequent siRNA-dependent degradation of a subset of RNA polymerase II-transcribed coding mRNAs by recruiting a mRNA decapping complex involving EDC4. Possesses RNA slicer activity but only on select RNAs bearing 5'- and 3'-flanking sequences to the region of guide-target complementarity. This Mus musculus (Mouse) protein is Protein argonaute-3 (Ago3).